The primary structure comprises 358 residues: UDP-N-acetylglucosamine--N-acetylmuramyl-(pentapeptide) pyrophosphoryl-undecaprenol N-acetylglucosamine transferase (358 aa).

UDP-N-acetyl-alpha-D-glucosamine-binding positions include 13-15 (TAG), R166, S196, and Q291.

This sequence belongs to the glycosyltransferase 28 family. MurG subfamily.

The protein resides in the cell membrane. It carries out the reaction di-trans,octa-cis-undecaprenyl diphospho-N-acetyl-alpha-D-muramoyl-L-alanyl-D-glutamyl-meso-2,6-diaminopimeloyl-D-alanyl-D-alanine + UDP-N-acetyl-alpha-D-glucosamine = di-trans,octa-cis-undecaprenyl diphospho-[N-acetyl-alpha-D-glucosaminyl-(1-&gt;4)]-N-acetyl-alpha-D-muramoyl-L-alanyl-D-glutamyl-meso-2,6-diaminopimeloyl-D-alanyl-D-alanine + UDP + H(+). The protein operates within cell wall biogenesis; peptidoglycan biosynthesis. In terms of biological role, cell wall formation. Catalyzes the transfer of a GlcNAc subunit on undecaprenyl-pyrophosphoryl-MurNAc-pentapeptide (lipid intermediate I) to form undecaprenyl-pyrophosphoryl-MurNAc-(pentapeptide)GlcNAc (lipid intermediate II). This Clostridium botulinum (strain Alaska E43 / Type E3) protein is UDP-N-acetylglucosamine--N-acetylmuramyl-(pentapeptide) pyrophosphoryl-undecaprenol N-acetylglucosamine transferase.